Here is an 81-residue protein sequence, read N- to C-terminus: MRKLALVPIQFYRYAISPLMASHCRFYPSCSCYAYEAIENHGLLRGGWLAVRRLGRCHPWNDGGFDPVPPAPSSRTSSIAE.

The tract at residues 61 to 81 is disordered; sequence NDGGFDPVPPAPSSRTSSIAE.

The protein belongs to the UPF0161 family.

The protein resides in the cell inner membrane. In terms of biological role, could be involved in insertion of integral membrane proteins into the membrane. This is Putative membrane protein insertion efficiency factor from Pseudomonas entomophila (strain L48).